A 157-amino-acid chain; its full sequence is Crossover junction endodeoxyribonuclease RuvC (157 aa).

Residues aspartate 7, glutamate 67, and aspartate 140 contribute to the active site. Mg(2+)-binding residues include aspartate 7, glutamate 67, and aspartate 140.

The protein belongs to the RuvC family. As to quaternary structure, homodimer which binds Holliday junction (HJ) DNA. The HJ becomes 2-fold symmetrical on binding to RuvC with unstacked arms; it has a different conformation from HJ DNA in complex with RuvA. In the full resolvosome a probable DNA-RuvA(4)-RuvB(12)-RuvC(2) complex forms which resolves the HJ. Requires Mg(2+) as cofactor.

It is found in the cytoplasm. The enzyme catalyses Endonucleolytic cleavage at a junction such as a reciprocal single-stranded crossover between two homologous DNA duplexes (Holliday junction).. Its function is as follows. The RuvA-RuvB-RuvC complex processes Holliday junction (HJ) DNA during genetic recombination and DNA repair. Endonuclease that resolves HJ intermediates. Cleaves cruciform DNA by making single-stranded nicks across the HJ at symmetrical positions within the homologous arms, yielding a 5'-phosphate and a 3'-hydroxyl group; requires a central core of homology in the junction. The consensus cleavage sequence is 5'-(A/T)TT(C/G)-3'. Cleavage occurs on the 3'-side of the TT dinucleotide at the point of strand exchange. HJ branch migration catalyzed by RuvA-RuvB allows RuvC to scan DNA until it finds its consensus sequence, where it cleaves and resolves the cruciform DNA. In Rickettsia typhi (strain ATCC VR-144 / Wilmington), this protein is Crossover junction endodeoxyribonuclease RuvC.